Here is a 539-residue protein sequence, read N- to C-terminus: MAAKDVKFSTDARDRMLRGVDILANAVKVTLGPKGRNVVIEKSFGAPRITKDGVTVAKEIELEDKFENMGAQMVREVASKTADLAGDGTTTATVLAQAIVKEGAKSVAAGMNPMDLKRGIDLAVEAIVKDLKAHAKKITSNDEIAQVGTISANGDSEIGRFLAEAMQKVGNEGVITVEEAKSLDTELEVVEGMQFDRGYVSPYFVTNSEKMRVELEDPYILIHEKKLSGLQTMLPLLEAVVQSGKPLLIVAEDVEGEALATLVVNKLRGGLKIAAVKAPGFGDRRKAMLEDIAILTGGTTISEDLGIKLENVTLSMLGRAKKVVIDKENTTIVDGAGAKKDIEARTQQIRLQIEETTSDYDREKLQERLAKLAGGVAVIRVGGATEVEVKERKDRVDDALHATRAAVEEGILPGGGVALLRATKVLDGVKTANADQKAGVDIIRRAIQVPVRQIVQNAGDDGSLVVGKLLEKDSYSWGFNAATGEYQDLVQAGVIDPAKVVRTALQDAASVASLLITTEALVADKPKKAETAAAPAMDY.

ATP contacts are provided by residues 30–33, K51, 87–91, G415, 480–482, and D496; these read TLGP, DGTTT, and NAA.

This sequence belongs to the chaperonin (HSP60) family. Forms a cylinder of 14 subunits composed of two heptameric rings stacked back-to-back. Interacts with the co-chaperonin GroES.

The protein resides in the cytoplasm. The catalysed reaction is ATP + H2O + a folded polypeptide = ADP + phosphate + an unfolded polypeptide.. In terms of biological role, together with its co-chaperonin GroES, plays an essential role in assisting protein folding. The GroEL-GroES system forms a nano-cage that allows encapsulation of the non-native substrate proteins and provides a physical environment optimized to promote and accelerate protein folding. The sequence is that of Chaperonin GroEL 1 from Bradyrhizobium sp. (strain ORS 278).